A 689-amino-acid chain; its full sequence is Glycine--tRNA ligase beta subunit (689 aa).

Belongs to the class-II aminoacyl-tRNA synthetase family. In terms of assembly, tetramer of two alpha and two beta subunits.

The protein resides in the cytoplasm. It carries out the reaction tRNA(Gly) + glycine + ATP = glycyl-tRNA(Gly) + AMP + diphosphate. This chain is Glycine--tRNA ligase beta subunit, found in Lacticaseibacillus casei (strain BL23) (Lactobacillus casei).